Consider the following 159-residue polypeptide: Cytochrome b6-f complex subunit 4 (159 aa).

3 helical membrane-spanning segments follow: residues 36-56, 95-115, and 131-151; these read LLYI…GLAV, LLGV…PFLE, and TVFL…TLPI.

Belongs to the cytochrome b family. PetD subfamily. The 4 large subunits of the cytochrome b6-f complex are cytochrome b6, subunit IV (17 kDa polypeptide, petD), cytochrome f and the Rieske protein, while the 4 small subunits are petG, petL, petM and petN. The complex functions as a dimer.

Its subcellular location is the plastid. It localises to the chloroplast thylakoid membrane. Functionally, component of the cytochrome b6-f complex, which mediates electron transfer between photosystem II (PSII) and photosystem I (PSI), cyclic electron flow around PSI, and state transitions. This Piper cenocladum (Ant piper) protein is Cytochrome b6-f complex subunit 4.